A 62-amino-acid chain; its full sequence is uncharacterized protein (62 aa).

This is an uncharacterized protein from Invertebrate iridescent virus 6 (IIV-6).